A 292-amino-acid chain; its full sequence is 3-methyl-2-oxobutanoate hydroxymethyltransferase 2 (292 aa).

2 residues coordinate Mg(2+): aspartate 52 and aspartate 91. 3-methyl-2-oxobutanoate is bound by residues 52 to 53 (DS), aspartate 91, and lysine 120. Glutamate 122 is a binding site for Mg(2+). Glutamate 189 acts as the Proton acceptor in catalysis.

Belongs to the PanB family. Homodecamer; pentamer of dimers. It depends on Mg(2+) as a cofactor.

It is found in the cytoplasm. The catalysed reaction is 3-methyl-2-oxobutanoate + (6R)-5,10-methylene-5,6,7,8-tetrahydrofolate + H2O = 2-dehydropantoate + (6S)-5,6,7,8-tetrahydrofolate. The protein operates within cofactor biosynthesis; (R)-pantothenate biosynthesis; (R)-pantoate from 3-methyl-2-oxobutanoate: step 1/2. Functionally, catalyzes the reversible reaction in which hydroxymethyl group from 5,10-methylenetetrahydrofolate is transferred onto alpha-ketoisovalerate to form ketopantoate. This Bradyrhizobium diazoefficiens (strain JCM 10833 / BCRC 13528 / IAM 13628 / NBRC 14792 / USDA 110) protein is 3-methyl-2-oxobutanoate hydroxymethyltransferase 2.